Consider the following 424-residue polypeptide: CinA-like protein (424 aa).

This sequence belongs to the CinA family.

This chain is CinA-like protein, found in Prochlorococcus marinus (strain MIT 9215).